The sequence spans 250 residues: Triosephosphate isomerase (250 aa).

8–10 (NWK) lines the substrate pocket. The Electrophile role is filled by histidine 96. Catalysis depends on glutamate 169, which acts as the Proton acceptor. Residues glycine 175, serine 214, and 235-236 (GG) each bind substrate.

This sequence belongs to the triosephosphate isomerase family. In terms of assembly, homodimer.

The protein localises to the cytoplasm. The enzyme catalyses D-glyceraldehyde 3-phosphate = dihydroxyacetone phosphate. It participates in carbohydrate biosynthesis; gluconeogenesis. Its pathway is carbohydrate degradation; glycolysis; D-glyceraldehyde 3-phosphate from glycerone phosphate: step 1/1. Its function is as follows. Involved in the gluconeogenesis. Catalyzes stereospecifically the conversion of dihydroxyacetone phosphate (DHAP) to D-glyceraldehyde-3-phosphate (G3P). The sequence is that of Triosephosphate isomerase from Oleidesulfovibrio alaskensis (strain ATCC BAA-1058 / DSM 17464 / G20) (Desulfovibrio alaskensis).